The sequence spans 87 residues: Glutaredoxin (87 aa).

Positions 1-87 (MFKVYGYDSN…GFDQLREYFK (87 aa)) constitute a Glutaredoxin domain. Cys-14 and Cys-17 are oxidised to a cystine.

Belongs to the glutaredoxin family.

Serves as a reducing agent for the phage-induced ribonucleotide reductase, but not for the bacterial ones. This specificity may be the result of sequence differences around the redox-active disulfide bond. The oxidized form accepts electrons from bacterial glutathione and will, in turn, reduce other small disulfides. Can also be reduced by NADPH and by bacterial thioredoxin reductase. This is Glutaredoxin (NRDC) from Enterobacteria phage T4 (Bacteriophage T4).